A 62-amino-acid polypeptide reads, in one-letter code: Large ribosomal subunit protein eL24 (62 aa).

Zn(2+) contacts are provided by Cys-6, Cys-9, Cys-32, and Cys-36. The C4-type zinc-finger motif lies at 6-36 (CYFCGQMLEPGTGKLYIKKDGSTYFMCSSKC).

This sequence belongs to the eukaryotic ribosomal protein eL24 family. In terms of assembly, part of the 50S ribosomal subunit. Forms a cluster with proteins L3 and L14. Requires Zn(2+) as cofactor.

Binds to the 23S rRNA. The polypeptide is Large ribosomal subunit protein eL24 (Methanosarcina mazei (strain ATCC BAA-159 / DSM 3647 / Goe1 / Go1 / JCM 11833 / OCM 88) (Methanosarcina frisia)).